The following is a 56-amino-acid chain: uncharacterized protein (56 aa).

This sequence belongs to the archaeal ATPase family.

This is an uncharacterized protein from Methanocaldococcus jannaschii (strain ATCC 43067 / DSM 2661 / JAL-1 / JCM 10045 / NBRC 100440) (Methanococcus jannaschii).